The sequence spans 313 residues: Beta-lactamase (313 aa).

Residues 1-15 (MQRIGVTDYTILGTV) form the signal peptide. Residue S190 is the Acyl-ester intermediate of the active site.

The protein belongs to the class-C beta-lactamase family.

It carries out the reaction a beta-lactam + H2O = a substituted beta-amino acid. Upon expression in E.coli enables the latter to utilize penicillin as a carbon source. The sequence is that of Beta-lactamase (penA) from Burkholderia multivorans (strain ATCC 17616 / 249).